The primary structure comprises 298 residues: ATP synthase gamma chain (298 aa).

The protein belongs to the ATPase gamma chain family. In terms of assembly, F-type ATPases have 2 components, CF(1) - the catalytic core - and CF(0) - the membrane proton channel. CF(1) has five subunits: alpha(3), beta(3), gamma(1), delta(1), epsilon(1). CF(0) has three main subunits: a, b and c.

Its subcellular location is the cell inner membrane. In terms of biological role, produces ATP from ADP in the presence of a proton gradient across the membrane. The gamma chain is believed to be important in regulating ATPase activity and the flow of protons through the CF(0) complex. This chain is ATP synthase gamma chain, found in Desulforapulum autotrophicum (strain ATCC 43914 / DSM 3382 / VKM B-1955 / HRM2) (Desulfobacterium autotrophicum).